Reading from the N-terminus, the 512-residue chain is Maturase K (512 aa).

It belongs to the intron maturase 2 family. MatK subfamily.

The protein resides in the plastid. It is found in the chloroplast. Its function is as follows. Usually encoded in the trnK tRNA gene intron. Probably assists in splicing its own and other chloroplast group II introns. The chain is Maturase K from Ginkgo biloba (Ginkgo).